The chain runs to 192 residues: BREX protein BrxB (192 aa).

It belongs to the BrxB family.

In terms of biological role, BREX systems (bacteriophage exclusion) provide immunity against bacteriophage. Part of a type 1 BREX system. This system allows phage adsorption but prevents phage DNA replication, without degradation of the phage DNA. Methylation of bacterial DNA by PglX probably guides self/non-self discrimination. When the brxA-brxB-brxC-pglX and pglZ-brxL operons are transformed into a susceptible B.subtilis strain (BEST7003) they confer resistance to bacteriophages SPbeta, SP16, Zeta, phi3T and SP02 and partial protection to phages SP01 and SP82G (these include lytic and temperate phage). They do not protect against phages phi105, rho10 or rho14. Additionally confers a very slight reduction in efficiency of plasmid transformation. The chain is BREX protein BrxB from Bacillus cereus (strain H3081.97).